The following is a 390-amino-acid chain: Succinate--CoA ligase [ADP-forming] subunit beta (390 aa).

Positions 9-245 (KHLLKKYNIP…TTQEDEHETM (237 aa)) constitute an ATP-grasp domain. Residues Lys-46, 53–55 (GRG), Glu-99, Ser-102, and Glu-107 contribute to the ATP site. The Mg(2+) site is built by Asn-200 and Asp-214. Substrate-binding positions include Asn-265 and 322-324 (GIV).

The protein belongs to the succinate/malate CoA ligase beta subunit family. In terms of assembly, heterotetramer of two alpha and two beta subunits. Mg(2+) is required as a cofactor.

It carries out the reaction succinate + ATP + CoA = succinyl-CoA + ADP + phosphate. The catalysed reaction is GTP + succinate + CoA = succinyl-CoA + GDP + phosphate. The protein operates within carbohydrate metabolism; tricarboxylic acid cycle; succinate from succinyl-CoA (ligase route): step 1/1. In terms of biological role, succinyl-CoA synthetase functions in the citric acid cycle (TCA), coupling the hydrolysis of succinyl-CoA to the synthesis of either ATP or GTP and thus represents the only step of substrate-level phosphorylation in the TCA. The beta subunit provides nucleotide specificity of the enzyme and binds the substrate succinate, while the binding sites for coenzyme A and phosphate are found in the alpha subunit. This Coxiella burnetii (strain CbuK_Q154) (Coxiella burnetii (strain Q154)) protein is Succinate--CoA ligase [ADP-forming] subunit beta.